Here is a 232-residue protein sequence, read N- to C-terminus: Aspartate/glutamate leucyltransferase (232 aa).

This sequence belongs to the R-transferase family. Bpt subfamily.

It localises to the cytoplasm. It carries out the reaction N-terminal L-glutamyl-[protein] + L-leucyl-tRNA(Leu) = N-terminal L-leucyl-L-glutamyl-[protein] + tRNA(Leu) + H(+). The catalysed reaction is N-terminal L-aspartyl-[protein] + L-leucyl-tRNA(Leu) = N-terminal L-leucyl-L-aspartyl-[protein] + tRNA(Leu) + H(+). Functionally, functions in the N-end rule pathway of protein degradation where it conjugates Leu from its aminoacyl-tRNA to the N-termini of proteins containing an N-terminal aspartate or glutamate. This is Aspartate/glutamate leucyltransferase from Vibrio vulnificus (strain CMCP6).